The sequence spans 312 residues: NAD-dependent protein deacylase Sirt4 (312 aa).

The N-terminal 16 residues, 1-16 (MRVGQLLRFRSTSLRS), are a transit peptide targeting the mitochondrion. The Deacetylase sirtuin-type domain occupies 28 to 312 (KPVVEDDIKR…FDFRNSKSVS (285 aa)). Residues 53–73 (GAGI…VGLY) and 134–137 (QNVD) each bind NAD(+). The active-site Proton acceptor is histidine 152. 4 residues coordinate Zn(2+): cysteine 160, cysteine 163, cysteine 211, and cysteine 214. Residues 251 to 253 (GSS), 277 to 279 (NIG), and cysteine 295 each bind NAD(+).

The protein belongs to the sirtuin family. Class II subfamily. Zn(2+) is required as a cofactor.

It localises to the mitochondrion matrix. It carries out the reaction N(6)-acetyl-L-lysyl-[protein] + NAD(+) + H2O = 2''-O-acetyl-ADP-D-ribose + nicotinamide + L-lysyl-[protein]. Its function is as follows. NAD-dependent protein deacylase. Catalyzes the NAD-dependent hydrolysis of acyl groups from lysine residues. The sequence is that of NAD-dependent protein deacylase Sirt4 (Sirt4) from Drosophila melanogaster (Fruit fly).